The following is a 352-amino-acid chain: Glutamine synthetase cytosolic isozyme (352 aa).

Residues phenylalanine 19–glycine 98 form the GS beta-grasp domain. The region spanning lysine 105–leucine 352 is the GS catalytic domain.

Belongs to the glutamine synthetase family. As to quaternary structure, homooctamer.

It localises to the cytoplasm. It carries out the reaction L-glutamate + NH4(+) + ATP = L-glutamine + ADP + phosphate + H(+). The protein is Glutamine synthetase cytosolic isozyme (GLN1) of Daucus carota (Wild carrot).